The sequence spans 118 residues: Large ribosomal subunit protein bL19 (118 aa).

This sequence belongs to the bacterial ribosomal protein bL19 family.

Functionally, this protein is located at the 30S-50S ribosomal subunit interface and may play a role in the structure and function of the aminoacyl-tRNA binding site. The protein is Large ribosomal subunit protein bL19 (rplS) of Serratia marcescens.